The sequence spans 280 residues: Pantothenate synthetase (280 aa).

M30–H37 is a binding site for ATP. Residue H37 is the Proton donor of the active site. Q61 is a (R)-pantoate binding site. Position 61 (Q61) interacts with beta-alanine. G148–D151 contributes to the ATP binding site. (R)-pantoate is bound at residue Q154. Residues V177 and L185–R188 contribute to the ATP site.

The protein belongs to the pantothenate synthetase family. Homodimer.

It is found in the cytoplasm. It catalyses the reaction (R)-pantoate + beta-alanine + ATP = (R)-pantothenate + AMP + diphosphate + H(+). It participates in cofactor biosynthesis; (R)-pantothenate biosynthesis; (R)-pantothenate from (R)-pantoate and beta-alanine: step 1/1. Catalyzes the condensation of pantoate with beta-alanine in an ATP-dependent reaction via a pantoyl-adenylate intermediate. The chain is Pantothenate synthetase from Azobacteroides pseudotrichonymphae genomovar. CFP2.